The following is a 97-amino-acid chain: Co-chaperonin GroES (97 aa).

The protein belongs to the GroES chaperonin family. Heptamer of 7 subunits arranged in a ring. Interacts with the chaperonin GroEL.

The protein localises to the cytoplasm. Its function is as follows. Together with the chaperonin GroEL, plays an essential role in assisting protein folding. The GroEL-GroES system forms a nano-cage that allows encapsulation of the non-native substrate proteins and provides a physical environment optimized to promote and accelerate protein folding. GroES binds to the apical surface of the GroEL ring, thereby capping the opening of the GroEL channel. This is Co-chaperonin GroES from Photorhabdus laumondii subsp. laumondii (strain DSM 15139 / CIP 105565 / TT01) (Photorhabdus luminescens subsp. laumondii).